Consider the following 622-residue polypeptide: Threonine--tRNA ligase (622 aa).

The editing domain stretch occupies residues 1 to 141; that stretch reads MKTLLIHSDY…SRKITTERKE (141 aa). The interval 199-498 is catalytic; that stretch reads PHVKYIKEKE…TLENKPPALP (300 aa). Residues Cys-291, His-343, and His-467 each contribute to the Zn(2+) site.

It belongs to the class-II aminoacyl-tRNA synthetase family. Homodimer. The cofactor is Zn(2+).

The protein resides in the cytoplasm. The enzyme catalyses tRNA(Thr) + L-threonine + ATP = L-threonyl-tRNA(Thr) + AMP + diphosphate + H(+). Its function is as follows. Catalyzes the attachment of threonine to tRNA(Thr) in a two-step reaction: L-threonine is first activated by ATP to form Thr-AMP and then transferred to the acceptor end of tRNA(Thr). Also edits incorrectly charged L-seryl-tRNA(Thr). The sequence is that of Threonine--tRNA ligase from Methanococcus maripaludis (strain C7 / ATCC BAA-1331).